Here is a 229-residue protein sequence, read N- to C-terminus: Probable transmembrane reductase CYB561D1 (229 aa).

At methionine 1 to arginine 24 the chain is on the cytoplasmic side. The 203-residue stretch at leucine 22–arginine 224 folds into the Cytochrome b561 domain. Residues glycine 25–serine 45 traverse the membrane as a helical segment. Over arginine 46–serine 53 the chain is Lumenal. Residues tryptophan 54–phenylalanine 74 traverse the membrane as a helical segment. Histidine 55 is a heme b binding site. Topologically, residues serine 75–arginine 91 are cytoplasmic. A helical transmembrane segment spans residues leucine 92–isoleucine 112. Heme b contacts are provided by histidine 93 and histidine 127. The Lumenal segment spans residues serine 113–serine 128. The helical transmembrane segment at tryptophan 129 to leucine 149 threads the bilayer. Over cysteine 150–cysteine 169 the chain is Cytoplasmic. Histidine 166 lines the heme b pocket. A helical membrane pass occupies residues glycine 170–phenylalanine 190. Residues glutamine 191–glutamine 193 lie on the Lumenal side of the membrane. Residues isoleucine 194–methionine 214 form a helical membrane-spanning segment. The Cytoplasmic portion of the chain corresponds to histidine 215–isoleucine 229.

Requires heme b as cofactor.

Its subcellular location is the membrane. The catalysed reaction is monodehydro-L-ascorbate radical(out) + L-ascorbate(in) = monodehydro-L-ascorbate radical(in) + L-ascorbate(out). It catalyses the reaction Fe(3+)(out) + L-ascorbate(in) = monodehydro-L-ascorbate radical(in) + Fe(2+)(out) + H(+). In terms of biological role, probable transmembrane reductase that may use ascorbate as an electron donor and transfer electrons across membranes to reduce monodehydro-L-ascorbate radical and iron cations Fe(3+) in another cellular compartment. The chain is Probable transmembrane reductase CYB561D1 from Mus musculus (Mouse).